An 850-amino-acid chain; its full sequence is Trimethylamine-N-oxide reductase (850 aa).

Positions 1–39 (MKNKDSLHVSRRRFLAQLGGLTVAGMLGPSLLTPRSARA) form a signal peptide, tat-type signal. S191 contacts Mo-bis(molybdopterin guanine dinucleotide).

Belongs to the prokaryotic molybdopterin-containing oxidoreductase family. Mo-bis(molybdopterin guanine dinucleotide) is required as a cofactor. Post-translationally, predicted to be exported by the Tat system. The position of the signal peptide cleavage has not been experimentally proven.

Its subcellular location is the periplasm. It catalyses the reaction trimethylamine + 2 Fe(III)-[cytochrome c] + H2O = trimethylamine N-oxide + 2 Fe(II)-[cytochrome c] + 3 H(+). In terms of biological role, reduces trimethylamine-N-oxide (TMAO) into trimethylamine; an anaerobic reaction coupled to energy-yielding reactions. The protein is Trimethylamine-N-oxide reductase (torA) of Salmonella typhimurium (strain LT2 / SGSC1412 / ATCC 700720).